Consider the following 335-residue polypeptide: GTPase Obg (335 aa).

The region spanning 1–158 is the Obg domain; the sequence is MFLDQITIEL…RQVELELKLI (158 aa). The region spanning 159 to 334 is the OBG-type G domain; it reads ADIGLVGFPN…LNSLFTNKLA (176 aa). Residues 165–172, 190–194, 215–218, 285–288, and 315–317 each bind GTP; these read GFPNAGKS, FTTLQ, DIPG, NKID, and SGL. Mg(2+)-binding residues include S172 and T192.

It belongs to the TRAFAC class OBG-HflX-like GTPase superfamily. OBG GTPase family. As to quaternary structure, monomer. Mg(2+) is required as a cofactor.

The protein localises to the cytoplasm. Its function is as follows. An essential GTPase (4.1 pmol GTP/min). Cannot substitute endogenous obg in E.coli, has a partially dominant-negative phenotype upon overexpression in liquid culture leading to decreased growth rate in a concentration-dependent fashion, with 50% of cells being elongated. Binds GTP, GDP and possibly (p)ppGpp with moderate affinity, with high nucleotide exchange rates and a fairly low GTP hydrolysis rate. It may play a role in control of the cell cycle, stress response, ribosome biogenesis and in those bacteria that undergo differentiation, in morphogenesis control. This chain is GTPase Obg, found in Chlamydia abortus (strain DSM 27085 / S26/3) (Chlamydophila abortus).